Consider the following 701-residue polypeptide: MDSSSSSSSAAARRRINAIHSHLVTSSRSSPLLRSNPTAGEFCLDNGYSVVLPEKLNTGSWNVYRSAKSPFKLVSRFPDHPDIATLHDNFEHAVHDFRDYKYLGTRVRVDGTVGDYKWMTYGEAGTARTALGSGLVHHGIPMGSSVGIYFINRPEWLIVDHACSSYSYVSVPLYDTLGPDAVKFIVNHATVQAIFCVAETLNSLLSCLSEMPSVRLVVVVGGLIESLPSLPSSSGVKVVSYSVLLNQGRSNPQRFFPPKPDDVATICYTSGTTGTPKGVVLTHANLIANVAGSSFSVKFFSSDVYISYLPLAHIYERANQILTVYFGVAVGFYQGDNMKLLDDLAALRPTVFSSVPRLYNRIYAGIINAVKTSGGLKERLFNAAYNAKKQALLNGKSASPIWDRLVFNKIKDRLGGRVRFMTSGASPLSPEVMEFLKVCFGGRVTEGYGMTETSCVISGMDEGDNLTGHVGSPNPACEVKLVDVPEMNYTSADQPHPRGEICVRGPIIFTGYYKDEIQTKEVIDEDGWLHTGDIGLWLPGGRLKIIDRKKNIFKLAQGEYIAPEKIENVYAKCKFVGQCFIYGDSFNSSLVAVVSVDPDVLKSWAASEGIKGGDLRELCNNPRVKAAVLSDMDTVGREAQLRGFEFAKAVTLVLEPFTLENGLLTPTFKIKRPQAKEYFAEAITNMYKELGASDPSANRGL.

Residues 1-38 constitute a propeptide, removed in mature form; sequence MDSSSSSSSAAARRRINAIHSHLVTSSRSSPLLRSNPT. Residues 15–23 carry the Microbody targeting signal motif; it reads RINAIHSHL. 266 to 277 is a binding site for ATP; it reads ICYTSGTTGTPK. The tract at residues 526–550 is fatty acid-binding; sequence DGWLHTGDIGLWLPGGRLKIIDRKK.

Belongs to the ATP-dependent AMP-binding enzyme family. The cofactor is Mg(2+). As to expression, expressed in roots, stems, leaves flowers and germinating seedling. Preferentially expressed in seeds and senescent leaves.

Its subcellular location is the peroxisome. The protein resides in the glyoxysome membrane. It catalyses the reaction a long-chain fatty acid + ATP + CoA = a long-chain fatty acyl-CoA + AMP + diphosphate. It carries out the reaction tetradecanoate + ATP + CoA = tetradecanoyl-CoA + AMP + diphosphate. The enzyme catalyses hexadecanoate + ATP + CoA = hexadecanoyl-CoA + AMP + diphosphate. The catalysed reaction is (9Z)-octadecenoate + ATP + CoA = (9Z)-octadecenoyl-CoA + AMP + diphosphate. It catalyses the reaction (9Z,12Z)-octadecadienoate + ATP + CoA = (9Z,12Z)-octadecadienoyl-CoA + AMP + diphosphate. It carries out the reaction (9Z,12Z,15Z)-octadecatrienoate + ATP + CoA = (9Z,12Z,15Z)-octadecatrienoyl-CoA + AMP + diphosphate. It participates in lipid metabolism; fatty acid metabolism. Its function is as follows. Activation of long-chain fatty acids for both synthesis of cellular lipids, and degradation via beta-oxidation. Preferentially uses palmitate, palmitoleate, oleate, linoleate and eicosenoate as substrates. Can use myristate and linolenate as substrates. May play a regulatory role both in fatty acid import into glyoxysomes and in fatty acid beta-oxidation. Functions redundantly with LACS7 in lipid mobilization for beta-oxidation during seed germination, which is essential for postgerminative growth and seedling establishment. The chain is Long chain acyl-CoA synthetase 6, peroxisomal from Arabidopsis thaliana (Mouse-ear cress).